Here is a 163-residue protein sequence, read N- to C-terminus: Large ribosomal subunit protein uL10 (163 aa).

It belongs to the universal ribosomal protein uL10 family. In terms of assembly, part of the ribosomal stalk of the 50S ribosomal subunit. The N-terminus interacts with L11 and the large rRNA to form the base of the stalk. The C-terminus forms an elongated spine to which L12 dimers bind in a sequential fashion forming a multimeric L10(L12)X complex.

Functionally, forms part of the ribosomal stalk, playing a central role in the interaction of the ribosome with GTP-bound translation factors. This is Large ribosomal subunit protein uL10 from Actinobacillus succinogenes (strain ATCC 55618 / DSM 22257 / CCUG 43843 / 130Z).